Consider the following 351-residue polypeptide: L-threonine 3-dehydrogenase (351 aa).

Cys-39 is a Zn(2+) binding site. Active-site charge relay system residues include Thr-41 and His-44. Zn(2+) contacts are provided by His-64, Glu-65, Cys-94, Cys-97, Cys-100, and Cys-108. NAD(+) contacts are provided by residues Ile-176, Asp-196, Arg-201, 271–273 (LGI), and 295–296 (IY).

This sequence belongs to the zinc-containing alcohol dehydrogenase family. In terms of assembly, homotetramer. The cofactor is Zn(2+).

Its subcellular location is the cytoplasm. The enzyme catalyses L-threonine + NAD(+) = (2S)-2-amino-3-oxobutanoate + NADH + H(+). The protein operates within amino-acid degradation; L-threonine degradation via oxydo-reductase pathway; glycine from L-threonine: step 1/2. In terms of biological role, catalyzes the NAD(+)-dependent oxidation of L-threonine to 2-amino-3-ketobutyrate. This is L-threonine 3-dehydrogenase from Francisella philomiragia subsp. philomiragia (strain ATCC 25017 / CCUG 19701 / FSC 153 / O#319-036).